A 238-amino-acid chain; its full sequence is Lipid transferase CIDEC (238 aa).

The interval 1–35 is required for liquid-liquid phase separation (LLPS); sequence MDYAMKSLSLLYPRSLSRHVAVSTAVVTQQLVSEP. The CIDE-N domain maps to 41–118; that stretch reads RARPCRVSTA…VLQKGQKWKS (78 aa).

The protein belongs to the CIDE family. Homodimer. Interacts with CIDEA. Homooligomer; undergoes liquid-liquid phase separation (LLPS) via its N-terminus, facilitating lipid droplet fusion, occurs at the lipid droplet contact sites. Interacts with PLIN1. Interacts with NFAT5; this interaction is direct and retains NFAT5 in the cytoplasm. Interacts with CEBPB. Interacts with isoform CLSTN3beta of CLSTN3; inhibiting the lipid transferase activity of CIDEC. Ubiquitinated and targeted to proteasomal degradation, resulting in a short half-life (about 15 minutes in 3T3-L1 cells). Protein stability depends on triaclyglycerol synthesis, fatty acid availability and lipid droplet formation.

It is found in the lipid droplet. The protein resides in the endoplasmic reticulum. It localises to the nucleus. It carries out the reaction a triacyl-sn-glycerol(in) = a triacyl-sn-glycerol(out). Lipid transferase specifically expressed in white adipose tissue, which promotes unilocular lipid droplet formation by mediating lipid droplet fusion. Lipid droplet fusion promotes their enlargement, restricting lipolysis and favoring lipid storage. Localizes on the lipid droplet surface, at focal contact sites between lipid droplets, and mediates atypical lipid droplet fusion by undergoing liquid-liquid phase separation (LLPS) and promoting directional net neutral lipid transfer from the smaller to larger lipid droplets. The transfer direction may be driven by the internal pressure difference between the contacting lipid droplet pair. Its role in neutral lipid transfer and lipid droplet enlargement is activated by the interaction with PLIN1. May also act as a CEBPB coactivator in the white adipose tissue to control the expression of a subset of CEBPB downstream target genes, including SOCS1, SOCS3, TGFB1, TGFBR1, ID2 and XDH. When overexpressed in preadipocytes, induces apoptosis or increases cell susceptibility to apoptosis induced by serum deprivation or TGFB treatment. The sequence is that of Lipid transferase CIDEC from Rattus norvegicus (Rat).